The chain runs to 195 residues: N-(5'-phosphoribosyl)anthranilate isomerase (195 aa).

It belongs to the TrpF family.

The enzyme catalyses N-(5-phospho-beta-D-ribosyl)anthranilate = 1-(2-carboxyphenylamino)-1-deoxy-D-ribulose 5-phosphate. It participates in amino-acid biosynthesis; L-tryptophan biosynthesis; L-tryptophan from chorismate: step 3/5. The sequence is that of N-(5'-phosphoribosyl)anthranilate isomerase from Methanoregula boonei (strain DSM 21154 / JCM 14090 / 6A8).